Here is a 216-residue protein sequence, read N- to C-terminus: Probable chemoreceptor glutamine deamidase CheD (216 aa).

This sequence belongs to the CheD family.

It catalyses the reaction L-glutaminyl-[protein] + H2O = L-glutamyl-[protein] + NH4(+). Functionally, probably deamidates glutamine residues to glutamate on methyl-accepting chemotaxis receptors (MCPs), playing an important role in chemotaxis. The chain is Probable chemoreceptor glutamine deamidase CheD from Halorhodospira halophila (strain DSM 244 / SL1) (Ectothiorhodospira halophila (strain DSM 244 / SL1)).